A 133-amino-acid polypeptide reads, in one-letter code: Small ribosomal subunit protein uS8 (133 aa).

Belongs to the universal ribosomal protein uS8 family. In terms of assembly, part of the 30S ribosomal subunit. Contacts proteins S5 and S12.

Its function is as follows. One of the primary rRNA binding proteins, it binds directly to 16S rRNA central domain where it helps coordinate assembly of the platform of the 30S subunit. In Chloroflexus aurantiacus (strain ATCC 29364 / DSM 637 / Y-400-fl), this protein is Small ribosomal subunit protein uS8.